The chain runs to 180 residues: NADH-quinone oxidoreductase subunit I (180 aa).

2 consecutive 4Fe-4S ferredoxin-type domains span residues 48 to 80 (IVLT…LQKA) and 90 to 119 (EFFR…LTPD). [4Fe-4S] cluster-binding residues include C60, C63, C66, C70, C99, C102, C105, and C109. The tract at residues 160–180 (GKPKGSAQKEAAPIDVKSILP) is disordered.

The protein belongs to the complex I 23 kDa subunit family. As to quaternary structure, NDH-1 is composed of 14 different subunits. Subunits NuoA, H, J, K, L, M, N constitute the membrane sector of the complex. It depends on [4Fe-4S] cluster as a cofactor.

The protein localises to the cell inner membrane. The enzyme catalyses a quinone + NADH + 5 H(+)(in) = a quinol + NAD(+) + 4 H(+)(out). NDH-1 shuttles electrons from NADH, via FMN and iron-sulfur (Fe-S) centers, to quinones in the respiratory chain. The immediate electron acceptor for the enzyme in this species is believed to be ubiquinone. Couples the redox reaction to proton translocation (for every two electrons transferred, four hydrogen ions are translocated across the cytoplasmic membrane), and thus conserves the redox energy in a proton gradient. This is NADH-quinone oxidoreductase subunit I from Tolumonas auensis (strain DSM 9187 / NBRC 110442 / TA 4).